Here is an 83-residue protein sequence, read N- to C-terminus: Exodeoxyribonuclease 7 small subunit (83 aa).

Belongs to the XseB family. As to quaternary structure, heterooligomer composed of large and small subunits.

The protein resides in the cytoplasm. The enzyme catalyses Exonucleolytic cleavage in either 5'- to 3'- or 3'- to 5'-direction to yield nucleoside 5'-phosphates.. Bidirectionally degrades single-stranded DNA into large acid-insoluble oligonucleotides, which are then degraded further into small acid-soluble oligonucleotides. This chain is Exodeoxyribonuclease 7 small subunit, found in Bradyrhizobium diazoefficiens (strain JCM 10833 / BCRC 13528 / IAM 13628 / NBRC 14792 / USDA 110).